Consider the following 314-residue polypeptide: L-lactate dehydrogenase (314 aa).

NAD(+) contacts are provided by residues Val17, Asp38, Lys43, Tyr69, and Gly83–Ala84. Residues Gln86 and Arg92 each coordinate substrate. NAD(+) contacts are provided by residues Ser105, Ala122–Asn124, and Ser147. Asn124–Asp127 serves as a coordination point for substrate. A substrate-binding site is contributed by Asp152–Arg155. Positions 157 and 172 each coordinate beta-D-fructose 1,6-bisphosphate. His179 acts as the Proton acceptor in catalysis. A Phosphotyrosine modification is found at Tyr223. Residue Thr232 coordinates substrate.

The protein belongs to the LDH/MDH superfamily. LDH family. In terms of assembly, homotetramer.

Its subcellular location is the cytoplasm. The enzyme catalyses (S)-lactate + NAD(+) = pyruvate + NADH + H(+). The protein operates within fermentation; pyruvate fermentation to lactate; (S)-lactate from pyruvate: step 1/1. Its activity is regulated as follows. Allosterically activated by fructose 1,6-bisphosphate (FBP). Catalyzes the conversion of lactate to pyruvate. The chain is L-lactate dehydrogenase from Corynebacterium glutamicum (strain R).